The primary structure comprises 178 residues: Large ribosomal subunit protein eL20x (178 aa).

This sequence belongs to the eukaryotic ribosomal protein eL20 family.

This is Large ribosomal subunit protein eL20x (RPL18AC) from Arabidopsis thaliana (Mouse-ear cress).